We begin with the raw amino-acid sequence, 87 residues long: Exendin-3 (87 aa).

Positions 1 to 21 (MKIILWLCVFGLFLATLFPVS) are cleaved as a signal peptide. Residues 22 to 45 (WQMPVESGLSSEDSASSESFASKI) constitute a propeptide that is removed on maturation. S86 is subject to Serine amide.

This sequence belongs to the glucagon family. Expressed by the venom gland.

The protein resides in the secreted. Its function is as follows. Stimulates vasoactive intestinal peptide (VIP) receptors in high concentrations (&gt;100 nM), resulting in both an increase in cAMP and amylase secretion from pancreatic acini, although at low concentrations (between 0.3 and 3 nM) it increases cAMP without stimulating amylase release. Stimulates the GLP-1 receptor (GLP1R). Induces hypotension that is mediated by relaxation of cardiac smooth muscle. The chain is Exendin-3 from Heloderma horridum horridum (Mexican beaded lizard).